A 313-amino-acid chain; its full sequence is tRNA-cytidine(32) 2-sulfurtransferase (313 aa).

The short motif at 47–52 (SGGKDS) is the PP-loop motif element. [4Fe-4S] cluster is bound by residues Cys122, Cys125, and Cys213.

The protein belongs to the TtcA family. As to quaternary structure, homodimer. Mg(2+) is required as a cofactor. Requires [4Fe-4S] cluster as cofactor.

It localises to the cytoplasm. It catalyses the reaction cytidine(32) in tRNA + S-sulfanyl-L-cysteinyl-[cysteine desulfurase] + AH2 + ATP = 2-thiocytidine(32) in tRNA + L-cysteinyl-[cysteine desulfurase] + A + AMP + diphosphate + H(+). It participates in tRNA modification. Catalyzes the ATP-dependent 2-thiolation of cytidine in position 32 of tRNA, to form 2-thiocytidine (s(2)C32). The sulfur atoms are provided by the cysteine/cysteine desulfurase (IscS) system. The chain is tRNA-cytidine(32) 2-sulfurtransferase from Yersinia pseudotuberculosis serotype IB (strain PB1/+).